The primary structure comprises 1332 residues: Xanthine dehydrogenase/oxidase (1332 aa).

Residues 4–91 form the 2Fe-2S ferredoxin-type domain; the sequence is DELVFFVNGK…HVAVTTVEGI (88 aa). [2Fe-2S] cluster contacts are provided by cysteine 43, cysteine 48, cysteine 51, cysteine 73, cysteine 113, cysteine 116, cysteine 148, and cysteine 150. The region spanning 229-414 is the FAD-binding PCMH-type domain; that stretch reads FEGERVTWIQ…LSIEIPYSRE (186 aa). FAD-binding positions include 257-264, phenylalanine 337, 347-351, aspartate 360, leucine 404, and lysine 422; these read LVVGNTEI and SLGGN. Cysteine 535 and cysteine 992 form a disulfide bridge. Mo-molybdopterin is bound by residues glutamine 767 and phenylalanine 798. 2 residues coordinate substrate: glutamate 802 and arginine 880. Arginine 912 lines the Mo-molybdopterin pocket. Residues phenylalanine 914 and threonine 1010 each coordinate substrate. Alanine 1079 provides a ligand contact to Mo-molybdopterin. The active-site Proton acceptor is glutamate 1261.

This sequence belongs to the xanthine dehydrogenase family. In terms of assembly, homodimer. Interacts with BTN1A1. The cofactor is [2Fe-2S] cluster. FAD serves as cofactor. It depends on Mo-molybdopterin as a cofactor. Post-translationally, subject to partial proteolysis; this alters the enzyme from the dehydrogenase form (D) to the oxidase form (O). In terms of processing, contains sulfhydryl groups that are easily oxidized (in vitro); this alters the enzyme from the dehydrogenase form (D) to the oxidase form (O). In terms of tissue distribution, detected in milk (at protein level).

Its subcellular location is the cytoplasm. The protein resides in the peroxisome. It localises to the secreted. The catalysed reaction is xanthine + NAD(+) + H2O = urate + NADH + H(+). It carries out the reaction hypoxanthine + NAD(+) + H2O = xanthine + NADH + H(+). The enzyme catalyses xanthine + O2 + H2O = urate + H2O2. With respect to regulation, can be converted from the dehydrogenase form (D) to the oxidase form (O) irreversibly by proteolysis or reversibly through the oxidation of sulfhydryl groups. Key enzyme in purine degradation. Catalyzes the oxidation of hypoxanthine to xanthine. Catalyzes the oxidation of xanthine to uric acid. Contributes to the generation of reactive oxygen species. The chain is Xanthine dehydrogenase/oxidase (XDH) from Bos taurus (Bovine).